The chain runs to 110 residues: Protein YcgL (110 aa).

One can recognise a YcgL domain in the interval 14–98 (MFCVIYRSSK…PPEDLLKQHL (85 aa)). The tract at residues 88 to 110 (PPPEDLLKQHLSSVGQNTSHADR) is disordered. The span at 97–110 (HLSSVGQNTSHADR) shows a compositional bias: polar residues.

The chain is Protein YcgL from Salmonella schwarzengrund (strain CVM19633).